Reading from the N-terminus, the 318-residue chain is Ribose-phosphate pyrophosphokinase (318 aa).

ATP contacts are provided by residues 46-48 (DGE) and 105-106 (RQ). His139 and Asp178 together coordinate Mg(2+). The active site involves Lys201. D-ribose 5-phosphate contacts are provided by residues Arg203, Asp227, and 231-235 (DTAGT).

Belongs to the ribose-phosphate pyrophosphokinase family. Class I subfamily. As to quaternary structure, homohexamer. Mg(2+) is required as a cofactor.

The protein resides in the cytoplasm. The enzyme catalyses D-ribose 5-phosphate + ATP = 5-phospho-alpha-D-ribose 1-diphosphate + AMP + H(+). The protein operates within metabolic intermediate biosynthesis; 5-phospho-alpha-D-ribose 1-diphosphate biosynthesis; 5-phospho-alpha-D-ribose 1-diphosphate from D-ribose 5-phosphate (route I): step 1/1. Its function is as follows. Involved in the biosynthesis of the central metabolite phospho-alpha-D-ribosyl-1-pyrophosphate (PRPP) via the transfer of pyrophosphoryl group from ATP to 1-hydroxyl of ribose-5-phosphate (Rib-5-P). This Helicobacter pylori (strain ATCC 700392 / 26695) (Campylobacter pylori) protein is Ribose-phosphate pyrophosphokinase.